Consider the following 230-residue polypeptide: RING finger protein 141 (230 aa).

A lipid anchor (N-myristoyl glycine) is attached at Gly2. The RING-type zinc-finger motif lies at 155–192; sequence CCICMDGRADLILPCAHSFCQKCIDKWSDRHRNCPICR.

The protein localises to the membrane. In terms of biological role, may be involved in spermatogenesis. The protein is RING finger protein 141 (RNF141) of Pongo abelii (Sumatran orangutan).